An 83-amino-acid polypeptide reads, in one-letter code: Short neurotoxin 1 (83 aa).

Residues 1–21 form the signal peptide; the sequence is MKTLLLTLVVVTIVCLDLGYT. 4 disulfide bridges follow: Cys24/Cys45, Cys38/Cys62, Cys64/Cys75, and Cys76/Cys81.

Belongs to the three-finger toxin family. Short-chain subfamily. Type I alpha-neurotoxin sub-subfamily. Expressed by the venom gland.

It localises to the secreted. Functionally, binds to muscle nicotinic acetylcholine receptor (nAChR) and inhibit acetylcholine from binding to the receptor, thereby impairing neuromuscular transmission. The protein is Short neurotoxin 1 of Pseudechis australis (Mulga snake).